Here is a 447-residue protein sequence, read N- to C-terminus: Putative FBD-associated F-box protein At1g61330 (447 aa).

The 48-residue stretch at 10–57 folds into the F-box domain; it reads KLIKRLSDELVECILSFLPVQSTLQHRVLSKRYRDTWKLSRDLDFSGI. The 33-residue stretch at 384–416 folds into the FBD domain; the sequence is VKIIGYKGHWHELDIVEFFVKNAPSLKRLELQM.

The protein is Putative FBD-associated F-box protein At1g61330 of Arabidopsis thaliana (Mouse-ear cress).